The chain runs to 278 residues: Putative pyruvate, phosphate dikinase regulatory protein (278 aa).

Position 149–156 (149–156) interacts with ADP; it reads GVSRSSKT.

It belongs to the pyruvate, phosphate/water dikinase regulatory protein family. PDRP subfamily.

The enzyme catalyses N(tele)-phospho-L-histidyl/L-threonyl-[pyruvate, phosphate dikinase] + ADP = N(tele)-phospho-L-histidyl/O-phospho-L-threonyl-[pyruvate, phosphate dikinase] + AMP + H(+). The catalysed reaction is N(tele)-phospho-L-histidyl/O-phospho-L-threonyl-[pyruvate, phosphate dikinase] + phosphate + H(+) = N(tele)-phospho-L-histidyl/L-threonyl-[pyruvate, phosphate dikinase] + diphosphate. In terms of biological role, bifunctional serine/threonine kinase and phosphorylase involved in the regulation of the pyruvate, phosphate dikinase (PPDK) by catalyzing its phosphorylation/dephosphorylation. This is Putative pyruvate, phosphate dikinase regulatory protein from Erythrobacter litoralis (strain HTCC2594).